Here is a 2377-residue protein sequence, read N- to C-terminus: DNA (cytosine-5-)-methyltransferase DMT5 (2377 aa).

The interval 24–56 (GTADGAVNGGNIPNSQSQKRKRASPSPEIESEE) is disordered. The region spanning 62 to 126 (YEIDYIADSR…KNPGKPRLSP (65 aa)) is the Chromo; shadow subtype domain. Residues 150–282 (GKSRAASSTD…KSSLPKAKLR (133 aa)) are disordered. Residues 201 to 213 (PTSKKVHPNKKCK) show a composition bias toward basic residues. 2 stretches are compositionally biased toward acidic residues: residues 217-238 (DDESDFVFEEGEWDEDEDDDND) and 245-263 (EDDEDDEQERSAEEPESDE). The segment covering 268-282 (PAKKTKSSLPKAKLR) has biased composition (basic residues). An SAM-dependent MTase C5-type domain is found at 347–753 (LRVATMCSGT…IAALKVACHK (407 aa)). C440 is a catalytic residue. The region spanning 1450–1771 (AERPVMVRGG…RSIATFMGIH (322 aa)) is the Helicase ATP-binding domain. 1463-1470 (DQVGYGKT) serves as a coordination point for ATP. Disordered regions lie at residues 1642 to 1680 (KGQAYRDKHDSDSKAKPITKEELERWEASEDEDDDENSK), 2313 to 2334 (KGRGSSISMTNEKRTPTLTVKS), and 2347 to 2377 (SSFRSKKRSMEARDAEGVSDDDENSELSDII). Positions 1645 to 1669 (AYRDKHDSDSKAKPITKEELERWEA) are enriched in basic and acidic residues. Positions 2152–2315 (KLEHLVNLIH…EIPQEEYKGR (164 aa)) constitute a Helicase C-terminal domain. The segment covering 2317-2334 (SSISMTNEKRTPTLTVKS) has biased composition (polar residues). Positions 2363–2377 (GVSDDDENSELSDII) are enriched in acidic residues.

It in the N-terminal section; belongs to the class I-like SAM-binding methyltransferase superfamily. C5-methyltransferase family. In the C-terminal section; belongs to the SNF2/RAD54 helicase family. Interacts with SWI6. It depends on Mg(2+) as a cofactor.

It is found in the nucleus. The protein localises to the chromosome. It carries out the reaction a 2'-deoxycytidine in DNA + S-adenosyl-L-methionine + ATP + H2O = a 5-methyl-2'-deoxycytidine in DNA + S-adenosyl-L-homocysteine + ADP + phosphate + 2 H(+). Hemimethylated DNA substrates stimulate ATP hydrolysis and this is a prerequisite for methyltransferase activity. In terms of biological role, ATP-dependent cytosine methylase that maintains DNA methylation by acting at hemimethylated palindromic 5'-CG-3' sites to produce symmetrically methylated DNA strands. DNA methylation may play a role in transcriptional silencing, particularly at transposable elements. This chain is DNA (cytosine-5-)-methyltransferase DMT5, found in Cryptococcus neoformans var. grubii serotype A (strain H99 / ATCC 208821 / CBS 10515 / FGSC 9487) (Filobasidiella neoformans var. grubii).